A 447-amino-acid polypeptide reads, in one-letter code: N-succinylarginine dihydrolase (447 aa).

Residues 19 to 28 (AGLSFGNEAS), asparagine 110, and 137 to 138 (HR) each bind substrate. Glutamate 174 is a catalytic residue. Arginine 212 contributes to the substrate binding site. Histidine 248 is an active-site residue. Residues aspartate 250 and asparagine 359 each coordinate substrate. The active-site Nucleophile is cysteine 365.

It belongs to the succinylarginine dihydrolase family. In terms of assembly, homodimer.

It catalyses the reaction N(2)-succinyl-L-arginine + 2 H2O + 2 H(+) = N(2)-succinyl-L-ornithine + 2 NH4(+) + CO2. It participates in amino-acid degradation; L-arginine degradation via AST pathway; L-glutamate and succinate from L-arginine: step 2/5. Catalyzes the hydrolysis of N(2)-succinylarginine into N(2)-succinylornithine, ammonia and CO(2). The sequence is that of N-succinylarginine dihydrolase from Salmonella gallinarum (strain 287/91 / NCTC 13346).